The primary structure comprises 395 residues: Phosphoglycerate kinase (395 aa).

Residues 22–24, Arg-37, 60–63, Arg-116, and Arg-149 each bind substrate; these read DLN and HFGR. ATP contacts are provided by residues Lys-199, Glu-322, and 352-355; that span reads GGDT.

It belongs to the phosphoglycerate kinase family. As to quaternary structure, monomer.

Its subcellular location is the cytoplasm. It carries out the reaction (2R)-3-phosphoglycerate + ATP = (2R)-3-phospho-glyceroyl phosphate + ADP. It participates in carbohydrate degradation; glycolysis; pyruvate from D-glyceraldehyde 3-phosphate: step 2/5. This Novosphingobium aromaticivorans (strain ATCC 700278 / DSM 12444 / CCUG 56034 / CIP 105152 / NBRC 16084 / F199) protein is Phosphoglycerate kinase.